The primary structure comprises 60 residues: Large ribosomal subunit protein bL32 (60 aa).

It belongs to the bacterial ribosomal protein bL32 family.

The polypeptide is Large ribosomal subunit protein bL32 (Streptococcus suis (strain 05ZYH33)).